We begin with the raw amino-acid sequence, 473 residues long: Ribulose bisphosphate carboxylase large chain (473 aa).

Substrate-binding residues include Asn-116 and Thr-166. The active-site Proton acceptor is Lys-168. Position 170 (Lys-170) interacts with substrate. The Mg(2+) site is built by Lys-194, Asp-196, and Glu-197. Lys-194 is subject to N6-carboxylysine. His-287 functions as the Proton acceptor in the catalytic mechanism. 3 residues coordinate substrate: Arg-288, His-320, and Ser-372.

It belongs to the RuBisCO large chain family. Type I subfamily. In terms of assembly, heterohexadecamer of 8 large chains and 8 small chains. Requires Mg(2+) as cofactor.

It carries out the reaction 2 (2R)-3-phosphoglycerate + 2 H(+) = D-ribulose 1,5-bisphosphate + CO2 + H2O. It catalyses the reaction D-ribulose 1,5-bisphosphate + O2 = 2-phosphoglycolate + (2R)-3-phosphoglycerate + 2 H(+). Its function is as follows. RuBisCO catalyzes two reactions: the carboxylation of D-ribulose 1,5-bisphosphate, the primary event in carbon dioxide fixation, as well as the oxidative fragmentation of the pentose substrate. Both reactions occur simultaneously and in competition at the same active site. The chain is Ribulose bisphosphate carboxylase large chain from Rhodobacter capsulatus (strain ATCC BAA-309 / NBRC 16581 / SB1003).